The chain runs to 506 residues: Voltage-gated potassium channel regulatory subunit KCNG4 (506 aa).

The Cytoplasmic portion of the chain corresponds to 1-216 (MPMSSRDRDL…EMVEDPQSGL (216 aa)). A helical transmembrane segment spans residues 217–238 (PGKVFACLSVLFVATTAVSLCV). The Extracellular portion of the chain corresponds to 239 to 259 (STMPDFRAEEGKGECTRKCYY). The chain crosses the membrane as a helical span at residues 260 to 281 (IFVVESICVAWFSLEFCLRFVQ). The Cytoplasmic segment spans residues 282–292 (APNKCQFFRGP). A helical transmembrane segment spans residues 293–312 (LNVIDILAISPYYVSLAVSD). At 313–326 (ESPEAGERPSSSSY) the chain is on the extracellular side. The helical; Voltage-sensor transmembrane segment at 327–351 (LEKVGLVLRVLRALRILYVMRLARH) threads the bilayer. The Cytoplasmic portion of the chain corresponds to 352 to 366 (SLGLQTLGLTVRRCA). Residues 367 to 388 (REFGLLMLFLAVAVTLFSPLVY) traverse the membrane as a helical segment. Residues 389–403 (VAENESGRVLEFTSI) lie on the Extracellular side of the membrane. An intramembrane region (helical) is located at residues 404 to 415 (PASYWWAIISMT). The Selectivity filter signature appears at 416–421 (TVGYGD). An intramembrane segment occupies 416-423 (TVGYGDMV). At 424-430 (PRSVPGQ) the chain is on the extracellular side. A helical transmembrane segment spans residues 431 to 459 (MVALSSILSGILIMAFPATSIFHTFSHSY). Residues 460-506 (LELKREQEQVQARLRRLQNTNSASERELLSDVDDLVPEGLTSPGRYM) are Cytoplasmic-facing.

This sequence belongs to the potassium channel family. G (TC 1.A.1.2) subfamily. Kv6.4/KCNG4 sub-subfamily. Heterotetramer with KCNB1. Does not form homomultimer.

The protein resides in the cell membrane. In terms of biological role, regulatory subunit of the voltage-gated potassium (Kv) channel which, when coassembled with KCNB1, modulates the kinetics parameters of the heterotetrameric channel namely the time course of activation, deactivation and inactivation and on the voltage-dependence of activation. Potassium channel subunit that does not form functional channels by itself. Reduces the deactivation rate. Modulates the threshold for activation by shifting by approximately 20 mV in hyperpolarizing direction. Markedly changes the inactivation by shifting the voltage dependence of inactivation by approximately 40 mV in hyperpolarizing direction. Acceleratee activation and enhances the time course of activation. The polypeptide is Voltage-gated potassium channel regulatory subunit KCNG4 (Mus musculus (Mouse)).